Reading from the N-terminus, the 158-residue chain is NAD(P)H-quinone oxidoreductase subunit N (158 aa).

The protein belongs to the complex I NdhN subunit family. As to quaternary structure, NDH-1 can be composed of about 15 different subunits; different subcomplexes with different compositions have been identified which probably have different functions.

It is found in the cellular thylakoid membrane. The catalysed reaction is a plastoquinone + NADH + (n+1) H(+)(in) = a plastoquinol + NAD(+) + n H(+)(out). It catalyses the reaction a plastoquinone + NADPH + (n+1) H(+)(in) = a plastoquinol + NADP(+) + n H(+)(out). Its function is as follows. NDH-1 shuttles electrons from an unknown electron donor, via FMN and iron-sulfur (Fe-S) centers, to quinones in the respiratory and/or the photosynthetic chain. The immediate electron acceptor for the enzyme in this species is believed to be plastoquinone. Couples the redox reaction to proton translocation, and thus conserves the redox energy in a proton gradient. Cyanobacterial NDH-1 also plays a role in inorganic carbon-concentration. This is NAD(P)H-quinone oxidoreductase subunit N from Cyanothece sp. (strain PCC 7425 / ATCC 29141).